Consider the following 80-residue polypeptide: U-poneritoxin(01)-Om3a (80 aa).

The signal sequence occupies residues 1–25; it reads MKPSGLALAFLVVFMMAIMYNSVQA. The propeptide occupies 26-39; sequence AAIADADAEAEAIA.

Belongs to the formicidae venom precursor-01 superfamily. Post-translationally, truncated sequences of this peptide have also been found in the venom. It is possible they have been cleaved in the venom. As to expression, expressed by the venom gland.

The protein resides in the secreted. Cationic amphipathic alpha-helical peptide with antimicrobial activities against E.coli (MIC=3.1 uM), S.aureus (MIC=25 uM), and S.cerevisiae (MIC=50 uM). Also shows histamine-releasing activity (37.5% at 10 uM). Does not show hemolytic activity, even at 50 uM. In Odontomachus monticola (Trap-jaw ant), this protein is U-poneritoxin(01)-Om3a.